Consider the following 211-residue polypeptide: Endonuclease YncB (211 aa).

The signal sequence occupies residues 1–19 (MKKILISMIAIVLSITLAA). A lipid anchor (N-palmitoyl cysteine) is attached at C20. A lipid anchor (S-diacylglycerol cysteine) is attached at C20. The disordered stretch occupies residues 24–63 (HAAKNHSDSNGTEQVSQDTHSNEYNQTEQKAGTPHSKNQK). Polar residues predominate over residues 31–53 (DSNGTEQVSQDTHSNEYNQTEQK). The TNase-like domain occupies 64-197 (KLVNVTLDRA…KSDKLSIWSK (134 aa)). Residue D77 coordinates Ca(2+). Residue R91 is part of the active site. 2 residues coordinate Ca(2+): D96 and T97. Active-site residues include E99 and R142.

It belongs to the thermonuclease family. It depends on Ca(2+) as a cofactor.

It is found in the cell membrane. Its activity is regulated as follows. Inhibited by aurintricalboxylic acid but not by Zn(2+). Functionally, shows DNase activity on double strand DNA. The polypeptide is Endonuclease YncB (yncB) (Bacillus subtilis (strain 168)).